Consider the following 200-residue polypeptide: Inducible T-cell costimulator (200 aa).

Positions 1–20 (MKPYFCRVFVFCFLIRLLTG) are cleaved as a signal peptide. At 21–144 (EINGSADHRM…QLCCQLKLWL (124 aa)) the chain is on the extracellular side. Asn23 carries an N-linked (GlcNAc...) asparagine glycan. Residues 30 to 133 (MFSFHNGGVQ…LSGGYLHIYE (104 aa)) enclose the Ig-like V-type domain. Intrachain disulfides connect Cys42/Cys109 and Cys63/Cys83. Residues Asn89 and Asn123 are each glycosylated (N-linked (GlcNAc...) asparagine). The chain crosses the membrane as a helical span at residues 145–165 (PVGCAAFVVVLLFGCILIIWF). Topologically, residues 166–200 (SKKKYGSSVHDPNSEYMFMAAVNTNKKSRLAGVTS) are cytoplasmic.

Homodimer; disulfide-linked. Interacts with ICOSLG. Interacts with PIK3R1. Interacts with TBK1; this interaction is critical for the maturation of T follicular regulatory cells. In terms of processing, N-glycosylated. Expressed on activated T-cells and resting memory T-cells. High expression seen in the thymic medulla and in the germinal centers and T-cell zones of lymph nodes and Peyer patches. Expressed at low levels in the spleen.

The protein resides in the cell membrane. Stimulatory receptor expressed in activated or antigen-experienced T-cells that plays an important role in the immune response. Upon binding to its ligand ICOSL expressed on antigen presenting cells (APCs), delivers costimulatory signals that enhances all basic T-cell responses to a foreign antigen, namely proliferation, secretion of lymphokines including IL10, up-regulation of molecules that mediate cell-cell interaction, and effective help for antibody secretion by B-cells. Also acts as a costimulatory receptor critical for the differentiation of T follicular regulatory cells upon immune challenges such as viral infection. Mechanistically, potentiates TCR-induced calcium flux by augmenting PLCG1 activation and actin remodeling. In addition, activates PI3K signaling pathways independently of calcium flux. Essential both for efficient interaction between T and B-cells and for normal antibody responses to T-cell dependent antigens. Prevents the apoptosis of pre-activated T-cells. Plays a critical role in CD40-mediated class switching of immunoglobin isotypes. The chain is Inducible T-cell costimulator (Icos) from Mus musculus (Mouse).